Consider the following 161-residue polypeptide: ATP synthase subunit b 1 (161 aa).

Residues 3 to 23 (LDATFYALVGLILFFVLIAYL) form a helical membrane-spanning segment.

It belongs to the ATPase B chain family. In terms of assembly, F-type ATPases have 2 components, F(1) - the catalytic core - and F(0) - the membrane proton channel. F(1) has five subunits: alpha(3), beta(3), gamma(1), delta(1), epsilon(1). F(0) has three main subunits: a(1), b(2) and c(10-14). The alpha and beta chains form an alternating ring which encloses part of the gamma chain. F(1) is attached to F(0) by a central stalk formed by the gamma and epsilon chains, while a peripheral stalk is formed by the delta and b chains.

It is found in the cell inner membrane. F(1)F(0) ATP synthase produces ATP from ADP in the presence of a proton or sodium gradient. F-type ATPases consist of two structural domains, F(1) containing the extramembraneous catalytic core and F(0) containing the membrane proton channel, linked together by a central stalk and a peripheral stalk. During catalysis, ATP synthesis in the catalytic domain of F(1) is coupled via a rotary mechanism of the central stalk subunits to proton translocation. In terms of biological role, component of the F(0) channel, it forms part of the peripheral stalk, linking F(1) to F(0). This Rhizobium meliloti (strain 1021) (Ensifer meliloti) protein is ATP synthase subunit b 1.